We begin with the raw amino-acid sequence, 614 residues long: uncharacterized protein (614 aa).

A run of 4 helical transmembrane segments spans residues 41-61 (GWIFLLAILTVGTGVMEAVLF), 87-107 (LIGMAALLLISIVWGFLASAV), 157-177 (DTVLTLANMFVYVLVYFITSG), and 178-198 (VVLVALDSWFLLPFITWIILF). Positions 43 to 330 (IFLLAILTVG…IMWESARLFE (288 aa)) constitute an ABC transmembrane type-1 domain. Residues 364–603 (IKFNDITFAY…NGLYAKLWNH (240 aa)) form the ABC transporter domain. 397–404 (GRSGAGKS) provides a ligand contact to ATP.

This sequence belongs to the ABC transporter superfamily.

It is found in the cell membrane. This is an uncharacterized protein from Haemophilus influenzae (strain ATCC 51907 / DSM 11121 / KW20 / Rd).